The chain runs to 328 residues: tRNA U34 carboxymethyltransferase (328 aa).

Residues lysine 91, tryptophan 105, lysine 110, glycine 130, 152 to 154 (DPS), methionine 196, tyrosine 200, and arginine 315 each bind carboxy-S-adenosyl-L-methionine.

It belongs to the class I-like SAM-binding methyltransferase superfamily. CmoB family. As to quaternary structure, homotetramer.

The enzyme catalyses carboxy-S-adenosyl-L-methionine + 5-hydroxyuridine(34) in tRNA = 5-carboxymethoxyuridine(34) in tRNA + S-adenosyl-L-homocysteine + H(+). Its function is as follows. Catalyzes carboxymethyl transfer from carboxy-S-adenosyl-L-methionine (Cx-SAM) to 5-hydroxyuridine (ho5U) to form 5-carboxymethoxyuridine (cmo5U) at position 34 in tRNAs. In Psychromonas ingrahamii (strain DSM 17664 / CCUG 51855 / 37), this protein is tRNA U34 carboxymethyltransferase.